A 186-amino-acid chain; its full sequence is ATP synthase subunit delta (186 aa).

This sequence belongs to the ATPase delta chain family. In terms of assembly, F-type ATPases have 2 components, F(1) - the catalytic core - and F(0) - the membrane proton channel. F(1) has five subunits: alpha(3), beta(3), gamma(1), delta(1), epsilon(1). F(0) has three main subunits: a(1), b(2) and c(10-14). The alpha and beta chains form an alternating ring which encloses part of the gamma chain. F(1) is attached to F(0) by a central stalk formed by the gamma and epsilon chains, while a peripheral stalk is formed by the delta and b chains.

Its subcellular location is the cellular chromatophore membrane. F(1)F(0) ATP synthase produces ATP from ADP in the presence of a proton or sodium gradient. F-type ATPases consist of two structural domains, F(1) containing the extramembraneous catalytic core and F(0) containing the membrane proton channel, linked together by a central stalk and a peripheral stalk. During catalysis, ATP synthesis in the catalytic domain of F(1) is coupled via a rotary mechanism of the central stalk subunits to proton translocation. In terms of biological role, this protein is part of the stalk that links CF(0) to CF(1). It either transmits conformational changes from CF(0) to CF(1) or is implicated in proton conduction. This chain is ATP synthase subunit delta, found in Rhodobacter capsulatus (Rhodopseudomonas capsulata).